Here is a 397-residue protein sequence, read N- to C-terminus: Mannonate dehydratase (397 aa).

The protein belongs to the mannonate dehydratase family. Fe(2+) serves as cofactor. Requires Mn(2+) as cofactor.

The enzyme catalyses D-mannonate = 2-dehydro-3-deoxy-D-gluconate + H2O. Its pathway is carbohydrate metabolism; pentose and glucuronate interconversion. Functionally, catalyzes the dehydration of D-mannonate. The chain is Mannonate dehydratase from Saccharophagus degradans (strain 2-40 / ATCC 43961 / DSM 17024).